We begin with the raw amino-acid sequence, 153 residues long: Arachidonate 5-lipoxygenase-activating protein (153 aa).

At 1-8 (MDQEAVGN) the chain is on the lumenal side. Residues 9 to 30 (VVLLAIVTLISVVQNGFFAHKV) form a helical membrane-spanning segment. Residues 31–52 (EHESRNQNGRSFQRTGTLAFER) are Cytoplasmic-facing. A helical membrane pass occupies residues 53–77 (VYTANQNCVDAYPTFLAVLWTAGLL). Over 78–80 (CSQ) the chain is Lumenal. Residues 81–102 (VPAAFAGLMYLFVRQKYFVGYL) traverse the membrane as a helical segment. Topologically, residues 103-107 (GERTQ) are cytoplasmic. The stretch at 108 to 115 (STPGYIFG) is an intramembrane region. A helical transmembrane segment spans residues 116-128 (KRIILFLFLMSLA). Residues 129-153 (GILNYCLILLFGSDFENYIKTISTT) lie on the Lumenal side of the membrane.

The protein belongs to the MAPEG family. Homotrimer. Interacts with LTC4S and ALOX5.

It is found in the nucleus membrane. It localises to the endoplasmic reticulum membrane. Its function is as follows. Required for leukotriene biosynthesis by ALOX5 (5-lipoxygenase). Anchors ALOX5 to the membrane. Binds arachidonic acid, and could play an essential role in the transfer of arachidonic acid to ALOX5. Binds to MK-886, a compound that blocks the biosynthesis of leukotrienes. The polypeptide is Arachidonate 5-lipoxygenase-activating protein (ALOX5AP) (Oryctolagus cuniculus (Rabbit)).